Reading from the N-terminus, the 177-residue chain is Interleukin-7 (177 aa).

A signal peptide spans 1-25 (MFHVSFRYIFGLPPLILVLLPVASS). 3 disulfides stabilise this stretch: Cys27–Cys166, Cys59–Cys154, and Cys72–Cys117. N-linked (GlcNAc...) asparagine glycosylation is found at Asn95, Asn116, and Asn141.

It belongs to the IL-7/IL-9 family. Interacts with IL7R and CSF2RG.

The protein localises to the secreted. Its function is as follows. Hematopoietic cytokine that plays an essential role in the development, expansion, and survival of naive and memory T-cells and B-cells thereby regulating the number of mature lymphocytes and maintaining lymphoid homeostasis. Mechanistically, exerts its biological effects through a receptor composed of IL7RA subunit and the cytokine receptor common subunit gamma/CSF2RG. Binding to the receptor leads to activation of various kinases including JAK1 or JAK3 depending on the cell type and subsequently propagation of signals through activation of several downstream signaling pathways including the PI3K/Akt/mTOR or the JAK-STAT5. This is Interleukin-7 (IL7) from Homo sapiens (Human).